Here is a 134-residue protein sequence, read N- to C-terminus: Large ribosomal subunit protein uL24 (134 aa).

This sequence belongs to the universal ribosomal protein uL24 family. Part of the 50S ribosomal subunit.

In terms of biological role, one of two assembly initiator proteins, it binds directly to the 5'-end of the 23S rRNA, where it nucleates assembly of the 50S subunit. Functionally, located at the polypeptide exit tunnel on the outside of the subunit. This chain is Large ribosomal subunit protein uL24, found in Sulfolobus acidocaldarius (strain ATCC 33909 / DSM 639 / JCM 8929 / NBRC 15157 / NCIMB 11770).